Consider the following 381-residue polypeptide: L-lactate dehydrogenase A-like 6B (381 aa).

NAD(+)-binding positions include 101–106 (DLDEDK) and Arg-148. Residues Arg-155, Asn-187, and Arg-218 each contribute to the substrate site. Residue Asn-187 participates in NAD(+) binding. The Proton acceptor role is filled by His-242. Substrate is bound at residue Thr-297.

Belongs to the LDH/MDH superfamily. LDH family. In terms of tissue distribution, testis specific.

The catalysed reaction is (S)-lactate + NAD(+) = pyruvate + NADH + H(+). Its pathway is fermentation; pyruvate fermentation to lactate; (S)-lactate from pyruvate: step 1/1. The polypeptide is L-lactate dehydrogenase A-like 6B (LDHAL6B) (Homo sapiens (Human)).